The primary structure comprises 200 residues: TATA-box-binding protein (200 aa).

2 tandem repeats follow at residues 25 to 101 (LQNI…ARII) and 115 to 192 (IQNI…YPVL).

This sequence belongs to the TBP family. In terms of assembly, belongs to the TFIID complex together with the TBP-associated factors (TAFs). Binds DNA as monomer.

The protein resides in the nucleus. In terms of biological role, general transcription factor that functions at the core of the DNA-binding multiprotein factor TFIID. Binding of TFIID to the TATA box is the initial transcriptional step of the pre-initiation complex (PIC), playing a role in the activation of eukaryotic genes transcribed by RNA polymerase II. This is TATA-box-binding protein from Mesembryanthemum crystallinum (Common ice plant).